The following is a 151-amino-acid chain: Acidic phospholipase A2 5 (151 aa).

Residues 1 to 27 (MYPAHLLVLLAVCVSLLGAASIPARPL) form the signal peptide. 7 cysteine pairs are disulfide-bonded: Cys-38–Cys-104, Cys-54–Cys-151, Cys-56–Cys-72, Cys-71–Cys-132, Cys-78–Cys-125, Cys-88–Cys-118, and Cys-111–Cys-123. Tyr-55, Gly-57, and Gly-59 together coordinate Ca(2+). His-75 is a catalytic residue. Position 76 (Asp-76) interacts with Ca(2+). The active site involves Asp-126.

Belongs to the phospholipase A2 family. Group I subfamily. D49 sub-subfamily. Ca(2+) serves as cofactor. As to expression, expressed by the venom gland.

The protein resides in the secreted. It catalyses the reaction a 1,2-diacyl-sn-glycero-3-phosphocholine + H2O = a 1-acyl-sn-glycero-3-phosphocholine + a fatty acid + H(+). PLA2 catalyzes the calcium-dependent hydrolysis of the 2-acyl groups in 3-sn-phosphoglycerides. The polypeptide is Acidic phospholipase A2 5 (Tropidechis carinatus (Australian rough-scaled snake)).